Consider the following 130-residue polypeptide: ATP synthase epsilon chain (130 aa).

Belongs to the ATPase epsilon chain family. In terms of assembly, F-type ATPases have 2 components, CF(1) - the catalytic core - and CF(0) - the membrane proton channel. CF(1) has five subunits: alpha(3), beta(3), gamma(1), delta(1), epsilon(1). CF(0) has three main subunits: a, b and c.

Its subcellular location is the cell membrane. Produces ATP from ADP in the presence of a proton gradient across the membrane. The sequence is that of ATP synthase epsilon chain (atpC) from Mycoplasmoides gallisepticum (strain R(low / passage 15 / clone 2)) (Mycoplasma gallisepticum).